Consider the following 104-residue polypeptide: Large ribosomal subunit protein bL21 (104 aa).

It belongs to the bacterial ribosomal protein bL21 family. Part of the 50S ribosomal subunit. Contacts protein L20.

Functionally, this protein binds to 23S rRNA in the presence of protein L20. The chain is Large ribosomal subunit protein bL21 from Salinispora tropica (strain ATCC BAA-916 / DSM 44818 / JCM 13857 / NBRC 105044 / CNB-440).